The sequence spans 36 residues: Insecticidal toxin LaIT1 (36 aa).

2 disulfide bridges follow: C11-C23 and C17-C29.

As to expression, expressed by the venom gland.

The protein localises to the secreted. Functionally, affects the activity of both ryanodine-sensitive calcium-release channels RyR1 and RyR2 with high potency. At lower concentrations the toxin increases full openings of the RyRs, and at higher concentrations it inhibits full openings and induce openings to subconductance levels and reduces the number of full conductance openings. The different actions may be attributed to the toxins binding at different sites on the RyRs, with binding at a high-affinity site mediating the increase in full openings and the induction of subconductance states evoked upon binding to a lower-affinity site. Shows insect lethality against crickets and common cutworms (only shows paralysis against cockroaches), but no toxicity is observed in mice. The polypeptide is Insecticidal toxin LaIT1 (Liocheles australasiae (Dwarf wood scorpion)).